Here is a 320-residue protein sequence, read N- to C-terminus: SPX domain-containing protein 4 (320 aa).

An SPX domain is found at 1 to 170; it reads MKFGKDFRSH…GGLLSLPFTQ (170 aa). Disordered stretches follow at residues 209-233 and 275-320; these read SSSA…VDVE and CSGA…PRDE. A compositionally biased stretch (polar residues) spans 278 to 289; the sequence is AITSESDSYSDS. Acidic residues predominate over residues 290–299; that stretch reads QIEDAEDDDK. Over residues 304–313 the composition is skewed to polar residues; the sequence is REQNTAQNAA.

In terms of assembly, homodimer. Interacts (via N-terminus) with PHR2 (via C-terminus) in the presence of inositol polyphosphate. Interacts with BHLH6. Degraded under Pi starvation conditions through the ubiquitin/26S proteasome pathway. Widely expressed. Detected in root cells, with the exception of epidermis, and in mesophyll and vascular bundles in leaves.

It localises to the membrane. The protein resides in the nucleus. The protein localises to the cytoplasm. Functionally, inositol polyphosphate sensor that associates with transcription factors to regulate Pi starvation responses. The SPX domain provides a basic binding surface for inositol polyphosphate signaling molecules. Interacts with PHR2 to inhibit its translocation to the nucleus and repress its DNA-binding activity, and then negatively regulate Pi signaling. This Oryza sativa subsp. japonica (Rice) protein is SPX domain-containing protein 4.